Consider the following 213-residue polypeptide: Sclerostin (213 aa).

The first 23 residues, 1–23, serve as a signal peptide directing secretion; sequence MQLPLALCLVCLLVHTAFRVVEG. The disordered stretch occupies residues 41–71; it reads GEYPEPPPELENNKTMNRAENGGRPPHHPFE. The N-linked (GlcNAc...) asparagine glycan is linked to Asn53. 4 disulfide bridges follow: Cys80-Cys134, Cys94-Cys148, Cys105-Cys165, and Cys109-Cys167. Positions 82–172 constitute a CTCK domain; the sequence is ELHFTRYVTD…ASCKCKRLTR (91 aa). The N-linked (GlcNAc...) asparagine glycan is linked to Asn175. Positions 178-213 are disordered; sequence ELKDFGTEAARPQKGRKPRPRARSAKANQAELENAY. Residues 190–201 are compositionally biased toward basic residues; it reads QKGRKPRPRARS.

The protein belongs to the sclerostin family. As to quaternary structure, interacts with LRP4 (via the extracellular domain); the interaction facilitates the inhibition of Wnt signaling. Interacts with LRP5 (via the first two YWTD-EGF repeat domains); the interaction inhibits Wnt-mediated signaling. Interacts with LRP6. As to expression, widely expressed at low levels with highest levels in bone, cartilage, kidney, liver, bone marrow and primary osteoblasts differentiated for 21 days. Detected in the subendothelial layer of the aortic intima (at protein level).

It localises to the secreted. The protein resides in the extracellular space. It is found in the extracellular matrix. In terms of biological role, negative regulator of bone growth that acts through inhibition of Wnt signaling and bone formation. This chain is Sclerostin, found in Homo sapiens (Human).